Reading from the N-terminus, the 537-residue chain is Cytochrome P450 monooxygenase AOL_s00215g282 (537 aa).

A helical transmembrane segment spans residues 9-29 (ATVVLCGSIVTVSIAYVIFVV). A glycan (N-linked (GlcNAc...) asparagine) is linked at Asn126. Cys451 is a heme binding site.

Belongs to the cytochrome P450 family. Heme is required as a cofactor.

The protein localises to the membrane. It participates in secondary metabolite biosynthesis; terpenoid biosynthesis. In terms of biological role, cytochrome P450 monooxygenase; part of the gene cluster that mediates the biosynthesis of sesquiterpenyl epoxy-cyclohexenoids (SECs) such as anthrobotrisins and arthrosporols, metabolites that possess a novel hybrid carbon skeleton consisting of a polyketide-derived epoxycyclohexenol combined with a terpenoid-derived monocyclic sesquiterpenol substructure (PKS-PTS hybrid). The SEC pathway plays an important role for fungal soil colonization via decreasing fungal nematode-capturing ability. Within the pathway, the cytochrome P450 monooxygenase AOL_s00215g282 acts as a m-cresol hydrolase that converts m-cresol to toluquinol. The pathway begins with the biosynthesis of 6-methylsalicylic acid (6-MSA), the first precursor of the polyketide-derived epoxycyclohexenol in arthrosporols, by the polyketide synthase (PKS) AOL_s00215g283 via condensation of 1 acetate and 3 malonate units. The 6-methylsalicylic acid decarboxylase AOL_s00215g281 then catalyzes the decarboxylation of 6-methylsalicylic acid to yield m-cresol. The cytochrome P450 monooxygenase AOL_s00215g282 further oxidizes m-cresol to yield toluquinol. With the assistance of the oxidoreductase AOL_s00215g277, the polyprenyl transferase AOL_s00215g276 catalyzes the farnesylation of toluquinol to produce farnesyl hydroquinone, the hybrid precursor for biosynthesis of SECs. Farnesyl hydroquinone undergoes epoxidation and then subsequent dehydrogenation to form farnesyl epoxy-quinone, the first and simplest SEC. The cytochrome P450 monooxygenase AOL_s00215g278 and the FAD-dependent monooxygenase AOL_s00215g279 might be involved in the oxygenation of the phenol moiety, most likely in the epoxy formation. The cytochrome P450 monooxygenases AOL_s00215g274 and AOL_s00215g280 are involved in specific regional ketone reductions at respectively C-4 and C-1 of farnesyl epoxy-quinone PubMed:33823587. This is Cytochrome P450 monooxygenase AOL_s00215g282 from Arthrobotrys oligospora (strain ATCC 24927 / CBS 115.81 / DSM 1491) (Nematode-trapping fungus).